The following is a 408-amino-acid chain: UPF0761 membrane protein azo3165 (408 aa).

The next 7 helical transmembrane spans lie at 29-49 (LAFTTLLALVPLLTVAIGVFG), 92-112 (LTLIGTAMLAVTALMLLATIE), 131-151 (ITVSWFMLTLGPVILGGSVVA), 172-192 (IAAATLPPLLLGALFSFLYYA), 197-217 (PVRLLHALAGGLCAALVFLLM), 220-240 (GLGLFIAGFPTYTLIYGTFAA), and 241-261 (LPIFLLWLYLSWTVILLGALI).

The protein belongs to the UPF0761 family.

The protein localises to the cell inner membrane. This chain is UPF0761 membrane protein azo3165, found in Azoarcus sp. (strain BH72).